Here is a 242-residue protein sequence, read N- to C-terminus: Vacuole localized DSC protein 1 (242 aa).

The next 2 membrane-spanning stretches (helical) occupy residues Pro-128–Phe-148 and Leu-152–Ser-172.

As to quaternary structure, part of the vacuole-localized DSC E3 ligase complex composed of at least TUL1, DSC2, DSC3, UBX3, CDC48 and VLD1.

The protein resides in the vacuole membrane. Component of the vacuole-localized DSC E3 ubiquitin ligase complex involved in the targeting of the complex to the vacuole membrane via the AP3 pathway to ubiquinate vacuolar membrane proteins. Competes with GLD1 to determine the subcellular localizations of the DSC complex. This Saccharomyces cerevisiae (strain ATCC 204508 / S288c) (Baker's yeast) protein is Vacuole localized DSC protein 1.